A 953-amino-acid chain; its full sequence is Isoleucine--tRNA ligase (953 aa).

The short motif at Pro-58–His-68 is the 'HIGH' region element. Glu-565 serves as a coordination point for L-isoleucyl-5'-AMP. Positions Lys-606–Ser-610 match the 'KMSKS' region motif. Residue Lys-609 participates in ATP binding. The Zn(2+) site is built by Cys-916, Cys-919, Cys-936, and Cys-939.

This sequence belongs to the class-I aminoacyl-tRNA synthetase family. IleS type 1 subfamily. As to quaternary structure, monomer. Zn(2+) is required as a cofactor.

Its subcellular location is the cytoplasm. It catalyses the reaction tRNA(Ile) + L-isoleucine + ATP = L-isoleucyl-tRNA(Ile) + AMP + diphosphate. Functionally, catalyzes the attachment of isoleucine to tRNA(Ile). As IleRS can inadvertently accommodate and process structurally similar amino acids such as valine, to avoid such errors it has two additional distinct tRNA(Ile)-dependent editing activities. One activity is designated as 'pretransfer' editing and involves the hydrolysis of activated Val-AMP. The other activity is designated 'posttransfer' editing and involves deacylation of mischarged Val-tRNA(Ile). This Colwellia psychrerythraea (strain 34H / ATCC BAA-681) (Vibrio psychroerythus) protein is Isoleucine--tRNA ligase.